The sequence spans 541 residues: Tegument protein UL21 homolog (541 aa).

Belongs to the alphaherpesvirinae UL21 protein family. As to quaternary structure, interacts (via C-terminus) with UL16.

The protein resides in the virion tegument. The protein localises to the host cytoplasm. Its subcellular location is the host nucleus. Its function is as follows. May participate in DNA packaging/capsid maturation events. Promotes efficient incorporation of tegument proteins UL46, UL49, and US3 homologs into virions. May also play a role in capsid transport to the trans-Golgi network (TGN). This Varicella-zoster virus (strain Oka vaccine) (HHV-3) protein is Tegument protein UL21 homolog.